A 347-amino-acid chain; its full sequence is Protein-glutamate methylesterase/protein-glutamine glutaminase 1 (347 aa).

The Response regulatory domain maps to 6–123 (RVLVVDDSAT…LRPFGDLAEK (118 aa)). At aspartate 57 the chain carries 4-aspartylphosphate. One can recognise a CheB-type methylesterase domain in the interval 150 to 342 (FRVGRKIVAI…EEILKMTAAR (193 aa)). Catalysis depends on residues serine 162, histidine 188, and aspartate 284.

Belongs to the CheB family. Phosphorylated by CheA. Phosphorylation of the N-terminal regulatory domain activates the methylesterase activity.

It is found in the cytoplasm. It carries out the reaction [protein]-L-glutamate 5-O-methyl ester + H2O = L-glutamyl-[protein] + methanol + H(+). It catalyses the reaction L-glutaminyl-[protein] + H2O = L-glutamyl-[protein] + NH4(+). Its function is as follows. Involved in chemotaxis. Part of a chemotaxis signal transduction system that modulates chemotaxis in response to various stimuli. Catalyzes the demethylation of specific methylglutamate residues introduced into the chemoreceptors (methyl-accepting chemotaxis proteins or MCP) by CheR. Also mediates the irreversible deamidation of specific glutamine residues to glutamic acid. The polypeptide is Protein-glutamate methylesterase/protein-glutamine glutaminase 1 (Rhizobium johnstonii (strain DSM 114642 / LMG 32736 / 3841) (Rhizobium leguminosarum bv. viciae)).